Reading from the N-terminus, the 159-residue chain is Immunoglobulin J chain (159 aa).

An N-terminal signal peptide occupies residues 1–22 (MKNHLLFWGVLAVFIKAVHVKA). Residue Gln-23 is modified to Pyrrolidone carboxylic acid. 3 cysteine pairs are disulfide-bonded: Cys-35/Cys-123, Cys-94/Cys-114, and Cys-131/Cys-156. An N-linked (GlcNAc...) (complex) asparagine glycan is attached at Asn-71.

In terms of assembly, part of the secretory IgA (sIgA) complex that consists of two, four or five IgA monomers, and two additional non-Ig polypeptides, namely the JCHAIN and the secretory component (the proteolytic product of PIGR). Part of the secretory IgM (sIgM) complex that consists of five IgM monomers, and two additional non-Ig polypeptides, namely the JCHAIN and the secretory component (the proteolytic product of PIGR). JCHAIN-containing IgM interacts (via CH4 domain) with FCRM (via Ig-like domain).

Its subcellular location is the secreted. Its function is as follows. Serves to link two monomer units of either IgM or IgA. In the case of IgM, the J chain-joined dimer is a nucleating unit for the IgM pentamer, and in the case of IgA it induces dimers and/or larger polymers. It also helps to bind these immunoglobulins to secretory component. The chain is Immunoglobulin J chain from Homo sapiens (Human).